A 417-amino-acid chain; its full sequence is GTP-binding protein YPT11 (417 aa).

Residues 1–34 (MSQRKRYSLNVVTSPSIPSPTPSAPIRTNESNWE) are disordered. Residues 97–104 (GDANVGKT), 228–232 (DTAGQ), and 292–295 (NKID) contribute to the GTP site. S-geranylgeranyl cysteine attachment occurs at residues Cys415 and Cys416.

This sequence belongs to the small GTPase superfamily. Rab family. In terms of assembly, interacts with MYO2 (via C-terminal tail domain). Interacts with YIF1, YIP3, YIP4 and YIP5.

Its subcellular location is the endoplasmic reticulum membrane. The protein localises to the bud tip. The protein resides in the bud neck. Functionally, involved in the positive control of both endoplasmic reticulum (ER) and mitochondrion inheritance during cell divison. Required for the MYO2-dependent retention of newly inherited mitochondria at the bud tip in developing daughter cells. The polypeptide is GTP-binding protein YPT11 (YPT11) (Saccharomyces cerevisiae (strain AWRI1631) (Baker's yeast)).